Here is a 407-residue protein sequence, read N- to C-terminus: Arginine biosynthesis bifunctional protein ArgJ (407 aa).

Residues threonine 169, lysine 192, threonine 203, glutamate 283, asparagine 402, and serine 407 each contribute to the substrate site. Threonine 203 (nucleophile) is an active-site residue.

Belongs to the ArgJ family. In terms of assembly, heterotetramer of two alpha and two beta chains.

It is found in the cytoplasm. It catalyses the reaction N(2)-acetyl-L-ornithine + L-glutamate = N-acetyl-L-glutamate + L-ornithine. The enzyme catalyses L-glutamate + acetyl-CoA = N-acetyl-L-glutamate + CoA + H(+). It participates in amino-acid biosynthesis; L-arginine biosynthesis; L-ornithine and N-acetyl-L-glutamate from L-glutamate and N(2)-acetyl-L-ornithine (cyclic): step 1/1. The protein operates within amino-acid biosynthesis; L-arginine biosynthesis; N(2)-acetyl-L-ornithine from L-glutamate: step 1/4. Catalyzes two activities which are involved in the cyclic version of arginine biosynthesis: the synthesis of N-acetylglutamate from glutamate and acetyl-CoA as the acetyl donor, and of ornithine by transacetylation between N(2)-acetylornithine and glutamate. This chain is Arginine biosynthesis bifunctional protein ArgJ, found in Mycobacterium leprae (strain TN).